The sequence spans 157 residues: Epithelial membrane protein 1 (157 aa).

Residues 1–21 (MLVLLAGIFVVHIATVIMLFV) traverse the membrane as a helical segment. N-linked (GlcNAc...) asparagine glycosylation is found at Asn-43 and Asn-46. 3 consecutive transmembrane segments (helical) span residues 67–87 (FMILSIIFCVIALLVFVFQLF), 95–115 (FFLSGATTLVCWLCILVGVSI), and 134–154 (YILGWICFCFSFIIGVLYLVL).

This sequence belongs to the PMP-22/EMP/MP20 family.

The protein localises to the membrane. In Homo sapiens (Human), this protein is Epithelial membrane protein 1 (EMP1).